The primary structure comprises 160 residues: Fluoride-specific ion channel FluC (160 aa).

4 consecutive transmembrane segments (helical) span residues 5-25 (LFISYGAILGASLRWAIGLLF), 34-54 (FGTLIANLFGCLIIGVLLGLF), 67-87 (FLITGFLGSLTTFSSFSSEVV), and 99-119 (FCVLMMHLFGCLAMTVLGIWI). Na(+) contacts are provided by Gly74 and Thr77.

The protein belongs to the fluoride channel Fluc/FEX (TC 1.A.43) family.

The protein resides in the cell inner membrane. It carries out the reaction fluoride(in) = fluoride(out). With respect to regulation, na(+) is not transported, but it plays an essential structural role and its presence is essential for fluoride channel function. In terms of biological role, fluoride-specific ion channel. Important for reducing fluoride concentration in the cell, thus reducing its toxicity. The protein is Fluoride-specific ion channel FluC of Haemophilus influenzae (strain ATCC 51907 / DSM 11121 / KW20 / Rd).